The following is a 432-amino-acid chain: Eukaryotic translation initiation factor 3 subunit M (432 aa).

In terms of domain architecture, PCI spans 184–356; that stretch reads EEEEAYQHIL…KVFLIHSVRY (173 aa). Basic and acidic residues-rich tracts occupy residues 392-401 and 423-432; these read AQQEAERKLV and QHRERNDNDD. The disordered stretch occupies residues 392 to 432; the sequence is AQQEAERKLVEASTQHNNDRGNQRRGGNRGQQHRERNDNDD.

It belongs to the eIF-3 subunit M family. As to quaternary structure, component of the eukaryotic translation initiation factor 3 (eIF-3) complex.

Its subcellular location is the cytoplasm. Component of the eukaryotic translation initiation factor 3 (eIF-3) complex, which is involved in protein synthesis of a specialized repertoire of mRNAs and, together with other initiation factors, stimulates binding of mRNA and methionyl-tRNAi to the 40S ribosome. The eIF-3 complex specifically targets and initiates translation of a subset of mRNAs involved in cell proliferation. This chain is Eukaryotic translation initiation factor 3 subunit M, found in Pyricularia oryzae (strain 70-15 / ATCC MYA-4617 / FGSC 8958) (Rice blast fungus).